Reading from the N-terminus, the 181-residue chain is MIRDLEYYDSPILRKVAAPIDEITDELRQLVLDMSETMTFYKGVGLAAPQVGHSVALFIMGVEKELDDGELIFCDFPKVFINPVITQKSEQLVYGNEGCLSIPGLRGEVARPDKITVTAKNLDGQPFSMTLEGFLARIVMHETDHLHGVLYIDRMSDKDKTKQFKNNLEKIRRKYSILRGL.

Fe cation contacts are provided by cysteine 99 and histidine 141. Residue glutamate 142 is part of the active site. Residue histidine 145 participates in Fe cation binding.

It belongs to the polypeptide deformylase family. Requires Fe(2+) as cofactor.

It carries out the reaction N-terminal N-formyl-L-methionyl-[peptide] + H2O = N-terminal L-methionyl-[peptide] + formate. In terms of biological role, removes the formyl group from the N-terminal Met of newly synthesized proteins. Requires at least a dipeptide for an efficient rate of reaction. N-terminal L-methionine is a prerequisite for activity but the enzyme has broad specificity at other positions. The protein is Peptide deformylase of Chlamydia muridarum (strain MoPn / Nigg).